Here is a 197-residue protein sequence, read N- to C-terminus: MKQIDIDDELYQYIASNTQSIGESASTILRRLLNLSGEKIQTANVELNQNNQTTTTLPKVPPVAEQTPALAAKPSAVAEKSVQQKNANVFNVLNKEELAMQKGVVGRFLFILSAFYRTHKTDFRAVLDIKGRDRVYFATSKEDLVNSGSSMNPKNITDSEYWVMTNSNTTRKKMMLHEVALCLGYSTEQAEKIRDYL.

This sequence belongs to the SeqA family. In terms of assembly, homodimer. Polymerizes to form helical filaments.

It localises to the cytoplasm. Functionally, negative regulator of replication initiation, which contributes to regulation of DNA replication and ensures that replication initiation occurs exactly once per chromosome per cell cycle. Binds to pairs of hemimethylated GATC sequences in the oriC region, thus preventing assembly of replication proteins and re-initiation at newly replicated origins. Repression is relieved when the region becomes fully methylated. In Pseudoalteromonas translucida (strain TAC 125), this protein is Negative modulator of initiation of replication.